Consider the following 30-residue polypeptide: Photosystem II reaction center protein Psb30 (30 aa).

At 1 to 6 the chain is on the lumenal side; sequence EVIAQL. A helical transmembrane segment spans residues 7 to 21; that stretch reads TMIAMIGIAGPMIIF. The Cytoplasmic portion of the chain corresponds to 22 to 30; sequence LLAVRRGNL.

The protein belongs to the Psb30/Ycf12 family. In terms of assembly, PSII is composed of 1 copy each of membrane proteins PsbA, PsbB, PsbC, PsbD, PsbE, PsbF, PsbH, PsbI, PsbJ, PsbK, PsbL, PsbM, PsbT, PsbX, PsbY, PsbZ, Psb30/Ycf12, peripheral proteins PsbO, CyanoQ (PsbQ), PsbU, PsbV and a large number of cofactors. It forms dimeric complexes. PSII binds multiple chlorophylls, carotenoids and specific lipids. serves as cofactor.

The protein localises to the cellular thylakoid membrane. A core subunit of photosystem II (PSII), probably helps stabilize the reaction center. PSII is a light-driven water plastoquinone oxidoreductase, using light energy to abstract electrons from H(2)O, generating a proton gradient subsequently used for ATP formation. This Thermostichus vulcanus (Synechococcus vulcanus) protein is Photosystem II reaction center protein Psb30.